A 268-amino-acid chain; its full sequence is Tryptophan synthase alpha chain (268 aa).

Residues glutamate 49 and aspartate 60 each act as proton acceptor in the active site.

Belongs to the TrpA family. Tetramer of two alpha and two beta chains.

The catalysed reaction is (1S,2R)-1-C-(indol-3-yl)glycerol 3-phosphate + L-serine = D-glyceraldehyde 3-phosphate + L-tryptophan + H2O. Its pathway is amino-acid biosynthesis; L-tryptophan biosynthesis; L-tryptophan from chorismate: step 5/5. Its function is as follows. The alpha subunit is responsible for the aldol cleavage of indoleglycerol phosphate to indole and glyceraldehyde 3-phosphate. This Shigella boydii serotype 4 (strain Sb227) protein is Tryptophan synthase alpha chain.